A 289-amino-acid chain; its full sequence is NFU1 iron-sulfur cluster scaffold homolog, mitochondrial (289 aa).

The N-terminal 56 residues, Met-1–Thr-56, are a transit peptide targeting the mitochondrion. A nifU region spans residues Ile-183–Val-251. [4Fe-4S] cluster contacts are provided by Cys-220 and Cys-223. A disordered region spans residues Glu-267–Asn-289.

This sequence belongs to the NifU family.

The protein resides in the mitochondrion. Functionally, molecular scaffold for [Fe-S] cluster assembly of mitochondrial iron-sulfur proteins. The chain is NFU1 iron-sulfur cluster scaffold homolog, mitochondrial from Drosophila willistoni (Fruit fly).